The sequence spans 260 residues: Triosephosphate isomerase (260 aa).

A substrate-binding site is contributed by Asn-11–Lys-13. Catalysis depends on His-103, which acts as the Electrophile. Residue Glu-175 is the Proton acceptor of the active site. Substrate-binding positions include Gly-181, Ser-220, and Gly-241 to Gly-242.

It belongs to the triosephosphate isomerase family. Homodimer.

It localises to the cytoplasm. The catalysed reaction is D-glyceraldehyde 3-phosphate = dihydroxyacetone phosphate. It participates in carbohydrate biosynthesis; gluconeogenesis. The protein operates within carbohydrate degradation; glycolysis; D-glyceraldehyde 3-phosphate from glycerone phosphate: step 1/1. Its function is as follows. Involved in the gluconeogenesis. Catalyzes stereospecifically the conversion of dihydroxyacetone phosphate (DHAP) to D-glyceraldehyde-3-phosphate (G3P). The sequence is that of Triosephosphate isomerase from Shewanella sp. (strain MR-7).